We begin with the raw amino-acid sequence, 310 residues long: Ribonuclease HIII (310 aa).

The region spanning 91–307 (YNCIGSDEAG…REKAQNLVTK (217 aa)) is the RNase H type-2 domain. A divalent metal cation contacts are provided by D97, E98, and D202.

This sequence belongs to the RNase HII family. RnhC subfamily. Mn(2+) is required as a cofactor. Requires Mg(2+) as cofactor.

It is found in the cytoplasm. The catalysed reaction is Endonucleolytic cleavage to 5'-phosphomonoester.. Its function is as follows. Endonuclease that specifically degrades the RNA of RNA-DNA hybrids. This Staphylococcus haemolyticus (strain JCSC1435) protein is Ribonuclease HIII.